We begin with the raw amino-acid sequence, 380 residues long: 1-deoxy-D-xylulose 5-phosphate reductoisomerase 2 (380 aa).

Residues Ser-10, Gly-11, Ser-12, Ile-13, Gly-36, Lys-37, Asn-38, and Asn-120 each contribute to the NADPH site. Lys-121 is a 1-deoxy-D-xylulose 5-phosphate binding site. Glu-122 contributes to the NADPH binding site. Asp-146 lines the Mn(2+) pocket. The 1-deoxy-D-xylulose 5-phosphate site is built by Ser-147, Glu-148, Ser-172, and His-195. Glu-148 lines the Mn(2+) pocket. Residue Gly-201 participates in NADPH binding. 1-deoxy-D-xylulose 5-phosphate contacts are provided by Ser-208, Asn-213, Lys-214, and Glu-217. Glu-217 provides a ligand contact to Mn(2+).

Belongs to the DXR family. Requires Mg(2+) as cofactor. Mn(2+) is required as a cofactor.

The catalysed reaction is 2-C-methyl-D-erythritol 4-phosphate + NADP(+) = 1-deoxy-D-xylulose 5-phosphate + NADPH + H(+). It functions in the pathway isoprenoid biosynthesis; isopentenyl diphosphate biosynthesis via DXP pathway; isopentenyl diphosphate from 1-deoxy-D-xylulose 5-phosphate: step 1/6. Its function is as follows. Catalyzes the NADPH-dependent rearrangement and reduction of 1-deoxy-D-xylulose-5-phosphate (DXP) to 2-C-methyl-D-erythritol 4-phosphate (MEP). The protein is 1-deoxy-D-xylulose 5-phosphate reductoisomerase 2 of Bacillus thuringiensis subsp. konkukian (strain 97-27).